The following is a 122-amino-acid chain: Large ribosomal subunit protein uL18 (122 aa).

The protein belongs to the universal ribosomal protein uL18 family. Part of the 50S ribosomal subunit; part of the 5S rRNA/L5/L18/L25 subcomplex. Contacts the 5S and 23S rRNAs.

Its function is as follows. This is one of the proteins that bind and probably mediate the attachment of the 5S RNA into the large ribosomal subunit, where it forms part of the central protuberance. The polypeptide is Large ribosomal subunit protein uL18 (Thermosipho africanus (strain TCF52B)).